We begin with the raw amino-acid sequence, 461 residues long: Protein YIG1 (461 aa).

A disordered region spans residues 58–80 (SNVGEDGGDVGNYSEEDDDGDEE). Acidic residues predominate over residues 71–80 (SEEDDDGDEE).

The protein resides in the cytoplasm. The protein localises to the nucleus. Its function is as follows. Involved in the regulation of anaerobiotic glycerol metabolism. This is Protein YIG1 (YIG1) from Saccharomyces cerevisiae (strain ATCC 204508 / S288c) (Baker's yeast).